Here is a 192-residue protein sequence, read N- to C-terminus: Imidazoleglycerol-phosphate dehydratase (192 aa).

It belongs to the imidazoleglycerol-phosphate dehydratase family.

The protein resides in the cytoplasm. The catalysed reaction is D-erythro-1-(imidazol-4-yl)glycerol 3-phosphate = 3-(imidazol-4-yl)-2-oxopropyl phosphate + H2O. The protein operates within amino-acid biosynthesis; L-histidine biosynthesis; L-histidine from 5-phospho-alpha-D-ribose 1-diphosphate: step 6/9. This Hydrogenobaculum sp. (strain Y04AAS1) protein is Imidazoleglycerol-phosphate dehydratase.